A 149-amino-acid polypeptide reads, in one-letter code: Large ribosomal subunit protein uL13 (149 aa).

The protein belongs to the universal ribosomal protein uL13 family. As to quaternary structure, part of the 50S ribosomal subunit.

Functionally, this protein is one of the early assembly proteins of the 50S ribosomal subunit, although it is not seen to bind rRNA by itself. It is important during the early stages of 50S assembly. The chain is Large ribosomal subunit protein uL13 from Bifidobacterium adolescentis (strain ATCC 15703 / DSM 20083 / NCTC 11814 / E194a).